The primary structure comprises 256 residues: 7-cyano-7-deazaguanine synthase (256 aa).

The segment at 1–22 is disordered; it reads MTDASADALTSPSNSGASQDTS. The span at 8 to 22 shows a compositional bias: polar residues; it reads ALTSPSNSGASQDTS. Residue 30–40 participates in ATP binding; sequence LSGGLDSVTCL. Zn(2+) is bound by residues Cys220, Cys230, Cys233, and Cys236.

Belongs to the QueC family. Zn(2+) is required as a cofactor.

It catalyses the reaction 7-carboxy-7-deazaguanine + NH4(+) + ATP = 7-cyano-7-deazaguanine + ADP + phosphate + H2O + H(+). Its pathway is purine metabolism; 7-cyano-7-deazaguanine biosynthesis. Functionally, catalyzes the ATP-dependent conversion of 7-carboxy-7-deazaguanine (CDG) to 7-cyano-7-deazaguanine (preQ(0)). In Psychrobacter sp. (strain PRwf-1), this protein is 7-cyano-7-deazaguanine synthase.